Consider the following 384-residue polypeptide: MSTLVQCGYFERGQCQSCRHIKLPMAQQLAAKTQELQQLLAPFVDNAEPQFLPPVVGDSSGFRNKAKMVALGAAHAPVLGIVSPSGEAVSLCDCLLYPADMQALLHRLERFVQQAGIPPYRVDKAKGELKFILLTRSQVRGEYMLRFVLRSRDAIARIERELPALMAEYPQIKVVSVNLQPVHMAILEGEEEIFLTENTRLEERFNDVPLFIRPKSFFQTNPQVAAKLYQTAREWVADFAPASLWDLFCGVGGFGLHCAAKDIPLTGIEIEAEAIACAKMSAQLMGLDKVQFMALDSTDFAKGDAAQTKPELIIVNPPRRGIGESLCHSLSEFAPKAILYSSCNPKTLAKDLGHIRGYRLTKVQLFDLFPHSDHFEVLALLVKD.

Residues Cys-7, Cys-15, Cys-18, and Cys-94 each coordinate [4Fe-4S] cluster. Positions 219, 248, 269, and 316 each coordinate S-adenosyl-L-methionine. Cys-343 (nucleophile) is an active-site residue.

Belongs to the class I-like SAM-binding methyltransferase superfamily. RNA M5U methyltransferase family. RlmC subfamily.

It catalyses the reaction uridine(747) in 23S rRNA + S-adenosyl-L-methionine = 5-methyluridine(747) in 23S rRNA + S-adenosyl-L-homocysteine + H(+). Its function is as follows. Catalyzes the formation of 5-methyl-uridine at position 747 (m5U747) in 23S rRNA. The polypeptide is 23S rRNA (uracil(747)-C(5))-methyltransferase RlmC (Shewanella sp. (strain MR-4)).